The sequence spans 341 residues: MEQKRPQLKARVDGDYGEFVLEPLARGYGVTIGNPIRRILMSSIPGTAVTSVYIEDVLHEFSTIPGVREDVIRLILNLKELVVKFHAPGPKTLTLRAQGEGEVRASAFEVPTDAEIVNPDLVIANLAEDGKLVMEVRVEEGEGYVSADKHATKDRINSIPVDAMFSPVRRVAYHVENTRVGQQTDLDRLILRVWTDGSAGPQEALDKAVEILRDELSVFGNVEPMPALESSYAAATPAAVYDPATATLPASVYDSPRQPDLGSLSINPQPFPTDQDTPRVTLEGLGLTTRVLHSLKEEGIDSVDALCALSDRDLKKVPGIGERSLDEIKQQLAQFGLALRD.

Residues 1–223 form an alpha N-terminal domain (alpha-NTD) region; it reads MEQKRPQLKA…DELSVFGNVE (223 aa). An alpha C-terminal domain (alpha-CTD) region spans residues 268–341; the sequence is PQPFPTDQDT…LAQFGLALRD (74 aa).

It belongs to the RNA polymerase alpha chain family. Homodimer. The RNAP catalytic core consists of 2 alpha, 1 beta, 1 beta' and 1 omega subunit. When a sigma factor is associated with the core the holoenzyme is formed, which can initiate transcription.

It carries out the reaction RNA(n) + a ribonucleoside 5'-triphosphate = RNA(n+1) + diphosphate. DNA-dependent RNA polymerase catalyzes the transcription of DNA into RNA using the four ribonucleoside triphosphates as substrates. In Deinococcus radiodurans (strain ATCC 13939 / DSM 20539 / JCM 16871 / CCUG 27074 / LMG 4051 / NBRC 15346 / NCIMB 9279 / VKM B-1422 / R1), this protein is DNA-directed RNA polymerase subunit alpha.